The chain runs to 144 residues: uncharacterized protein (144 aa).

A run of 4 helical transmembrane segments spans residues 7-29 (FPASVLQIALALFLLASGARDLV), 51-73 (VAIGVLTLAVSLCCLTAGFFLLV), 85-107 (AVLALFVVLWALNMVLVDVVGAF), and 122-139 (HLHHTAVDLLVLGALIFV).

The protein resides in the cell membrane. This is an uncharacterized protein from Treponema pallidum (strain Nichols).